The primary structure comprises 196 residues: dTTP/UTP pyrophosphatase (196 aa).

Asp-77 acts as the Proton acceptor in catalysis.

Belongs to the Maf family. YhdE subfamily. The cofactor is a divalent metal cation.

It localises to the cytoplasm. The enzyme catalyses dTTP + H2O = dTMP + diphosphate + H(+). It carries out the reaction UTP + H2O = UMP + diphosphate + H(+). Functionally, nucleoside triphosphate pyrophosphatase that hydrolyzes dTTP and UTP. May have a dual role in cell division arrest and in preventing the incorporation of modified nucleotides into cellular nucleic acids. The polypeptide is dTTP/UTP pyrophosphatase (Christiangramia forsetii (strain DSM 17595 / CGMCC 1.15422 / KT0803) (Gramella forsetii)).